The primary structure comprises 526 residues: uncharacterized protein (526 aa).

WD repeat units follow at residues 210 to 248 and 452 to 491; these read SMEQYINSIAISPNKKYIALATTCGLIIYNLIDKTHHDT and SHNSCVTSIAISSNNKMILTAGLDGLLKLWNSKTLNLIDS.

This is an uncharacterized protein from Acanthamoeba polyphaga mimivirus (APMV).